Consider the following 268-residue polypeptide: Tryptophan synthase alpha chain (268 aa).

Active-site proton acceptor residues include E49 and D60.

It belongs to the TrpA family. In terms of assembly, tetramer of two alpha and two beta chains.

It catalyses the reaction (1S,2R)-1-C-(indol-3-yl)glycerol 3-phosphate + L-serine = D-glyceraldehyde 3-phosphate + L-tryptophan + H2O. The protein operates within amino-acid biosynthesis; L-tryptophan biosynthesis; L-tryptophan from chorismate: step 5/5. Functionally, the alpha subunit is responsible for the aldol cleavage of indoleglycerol phosphate to indole and glyceraldehyde 3-phosphate. The protein is Tryptophan synthase alpha chain of Sodalis glossinidius (strain morsitans).